A 362-amino-acid polypeptide reads, in one-letter code: Melatonin receptor type 1B (362 aa).

Residues 1 to 42 (MSENGSFANCCEAGGWAVRPGWSGAGSARPSRTPRPPWVAPA) are Extracellular-facing. Asn4 is a glycosylation site (N-linked (GlcNAc...) asparagine). The chain crosses the membrane as a helical span at residues 43–63 (LSAVLIVTTAVDVVGNLLVIL). At 64 to 76 (SVLRNRKLRNAGN) the chain is on the cytoplasmic side. The chain crosses the membrane as a helical span at residues 77–97 (LFLVSLALADLVVAFYPYPLI). The Extracellular portion of the chain corresponds to 98–115 (LVAIFYDGWALGEEHCKA). The cysteines at positions 113 and 190 are disulfide-linked. A helical membrane pass occupies residues 116–136 (SAFVMGLSVIGSVFNITAIAI). Topologically, residues 137–155 (NRYCYICHSMAYHRIYRRW) are cytoplasmic. A helical transmembrane segment spans residues 156–176 (HTPLHICLIWLLTVVALLPNF). Residues Asn175 and Gln194 each coordinate melatonin. At 177-200 (FVGSLEYDPRIYSCTFIQTASTQY) the chain is on the extracellular side. Residues 201 to 221 (TAAVVVIHFLLPIAVVSFCYL) form a helical membrane-spanning segment. The Cytoplasmic portion of the chain corresponds to 222–253 (RIWVLVLQARRKAKPESRLCLKPSDLRSFLTM). Residues 254-274 (FVVFVIFAICWAPLNCIGLAV) traverse the membrane as a helical segment. The Extracellular portion of the chain corresponds to 275–287 (AINPQEMAPQIPE). The helical transmembrane segment at 288 to 308 (GLFVTSYLLAYFNSCLNAIVY) threads the bilayer. Over 309-362 (GLLNQNFRREYKRILLALWNPRHCIQDASKGSHAEGLQSPAPPIIGVQHQADAL) the chain is Cytoplasmic.

It belongs to the G-protein coupled receptor 1 family. As to quaternary structure, interacts with GPR61, GPR62 and GPR135. As to expression, expressed in retina and less in brain and hippocampus.

The protein localises to the cell membrane. Functionally, high affinity receptor for melatonin. Likely to mediate the reproductive and circadian actions of melatonin. The activity of this receptor is mediated by pertussis toxin sensitive G proteins that inhibit adenylate cyclase activity. The polypeptide is Melatonin receptor type 1B (MTNR1B) (Homo sapiens (Human)).